The primary structure comprises 335 residues: MKMIGFEKPFKLEEGNLFKVYEQRKPTPENDDILVKVNSISVNPVDTKQRQMEVTQAPRVLGFDAIGTVEAIGPNVTLFSPGDVVFYAGSPNRQGSNATYQLVSEAIVAKAPHNISANEAVSLPLTGITAYETFFDTFKISHNPSENIGKSVLIINGAGGVGSIATQIAKRYGLTVITTASRQETTEWCEKMGADIVLNHKEDLVRQFKEKEIPLVDYIFCTYNTDLYYNTMIELIKPLGHITTIVAFNEDQDLNALKLKSITFTHEFMFARPIHRTPDMIKQHEYLEDITKNIESGHYQPTTTQVFEGLSPENLYQAHLLLEKQSMIGKLVINI.

It belongs to the zinc-containing alcohol dehydrogenase family. Quinone oxidoreductase subfamily.

The chain is Zinc-type alcohol dehydrogenase-like protein SAR2277 from Staphylococcus aureus (strain MRSA252).